We begin with the raw amino-acid sequence, 513 residues long: MSTARPRIITSKAPLLPQQTTPEQRYWRQYTSAQLVKEHNSVTHISFNPQHPHDFAVTSSTRVQIFSSRTRQVIKTFSRFKDVVYSASFRSDGKLLCAGDATGLVSVYDSYNPRTILLSINASTHPTHVTKFHTQDNKILATASDDRVTRLWDISNAYEPQLELTGATDYVRTLSFIPAAPHLVATGSYDGLIRLYDTRSSGSTPIYSLNHDQPVENVIAVSPTQIVSCGGNNFKVWDLTSNKKLYERGNFNKAVTCLDYVENFDSPMQSALIASSLDGHVKVFDPLDNFQVKFGWKFSGPVLSCAVSPSTAQGNRHLVAGLSSGLLAIRTKKKEKRSSDKENAPASFNKNAKSNNFQRMMRGSEYQGDQEHIIHNDKVRSQRRMRAFERNINQFKWSEALDNAFVPGMAKELTLTVLQELRKRGKVRVALYGRDESTLEPLLNWCLKGIEDVRSASIVADWVAVVLELYGNTLESSPVLQELMIDLKTKVRHEIHKSKEAQRIEGMLQLLTS.

WD repeat units lie at residues 37–78 (KEHN…KTFS), 79–118 (RFKDVVYSASFRSDGKLLCAGDATGLVSVYDSYNPRTILL), 124–162 (THPTHVTKFHTQDNKILATASDDRVTRLWDISNAYEPQL), 166–206 (GATD…STPI), 210–247 (NHDQPVENVIAVSPTQIVSCGGNNFKVWDLTSNKKLYE), and 250–294 (NFNK…QVKF). Residues 332-354 (KKKEKRSSDKENAPASFNKNAKS) form a disordered region.

Interacts with snoRNA U3. Interacts with MPP10. Component of the ribosomal small subunit (SSU) processome composed of at least 40 protein subunits and snoRNA U3. In the absence of snoRNA3, forms a complex with other t-UTPs. This complex can associate with pre-18S ribosomal RNAs.

The protein resides in the nucleus. Its subcellular location is the nucleolus. In terms of biological role, involved in nucleolar processing of pre-18S ribosomal RNA. Required for optimal pre-ribosomal RNA transcription by RNA polymerase I together with a subset of U3 proteins required for transcription (t-UTPs). The sequence is that of U3 small nucleolar RNA-associated protein 15 (UTP15) from Saccharomyces cerevisiae (strain ATCC 204508 / S288c) (Baker's yeast).